The following is a 226-amino-acid chain: CRISPR-associated protein Cas5 (226 aa).

The protein belongs to the CRISPR-associated protein Cas5 family. Subtype I-A/Apern subfamily. Can form a Cascade complex with Csa5, Cas7, Cas3, Cas3' and Cas8a2.

In terms of biological role, CRISPR (clustered regularly interspaced short palindromic repeat) is an adaptive immune system that provides protection against mobile genetic elements (viruses, transposable elements and conjugative plasmids). CRISPR clusters contain spacers, sequences complementary to antecedent mobile elements, and target invading nucleic acids. CRISPR clusters are transcribed and processed into CRISPR RNA (crRNA). The sequence is that of CRISPR-associated protein Cas5 (cas5a) from Thermoproteus tenax (strain ATCC 35583 / DSM 2078 / JCM 9277 / NBRC 100435 / Kra 1).